Consider the following 443-residue polypeptide: Tol-Pal system protein TolB (443 aa).

Residues 1-31 (MMIMTTRTFFSWFIVICAFWLTSFSSVPVHA) form the signal peptide. A disordered region spans residues 422–443 (ERQLPTPNDASDPAWSPLLNIQ).

The protein belongs to the TolB family. In terms of assembly, the Tol-Pal system is composed of five core proteins: the inner membrane proteins TolA, TolQ and TolR, the periplasmic protein TolB and the outer membrane protein Pal. They form a network linking the inner and outer membranes and the peptidoglycan layer.

It is found in the periplasm. Its function is as follows. Part of the Tol-Pal system, which plays a role in outer membrane invagination during cell division and is important for maintaining outer membrane integrity. This is Tol-Pal system protein TolB from Bartonella henselae (strain ATCC 49882 / DSM 28221 / CCUG 30454 / Houston 1) (Rochalimaea henselae).